Here is a 376-residue protein sequence, read N- to C-terminus: MLRSVVLAGGGTAGHVEPALAVADALRATDSRVRLTLLGTATGLEARLVPARGHELATVPKVPMPRRPTPAVFKLPARFLDAICQAGETLDLVRADVVVGFGGYVSAPAYLAARRRGIPIVVHEANPLPGLANRLGARLTPFVATSYPSTPLRGATLTGIPLRGEILTLDRSPAAMRAARARYGLDPHRPTLLVFGGSQGARSLNQVMTAAAHPLAAAGIQVLHATGPKNFDEVAAALPLDLPTPYELRPYLDHIPSAYAAADMTLCRSGAMTCAELAAAGLPAVYVPLPHGNGEQRRNALPTVEAGGGLLVDDAELSASWLLENALPVLISAERLAKMSAACAGSGHPQAAAAIVAMIRDAAATRRRSRPRHAAP.

UDP-N-acetyl-alpha-D-glucosamine contacts are provided by residues 12 to 14 (TAG), asparagine 126, arginine 163, serine 198, and glutamine 296.

It belongs to the glycosyltransferase 28 family. MurG subfamily.

Its subcellular location is the cell membrane. It carries out the reaction di-trans,octa-cis-undecaprenyl diphospho-N-acetyl-alpha-D-muramoyl-L-alanyl-D-glutamyl-meso-2,6-diaminopimeloyl-D-alanyl-D-alanine + UDP-N-acetyl-alpha-D-glucosamine = di-trans,octa-cis-undecaprenyl diphospho-[N-acetyl-alpha-D-glucosaminyl-(1-&gt;4)]-N-acetyl-alpha-D-muramoyl-L-alanyl-D-glutamyl-meso-2,6-diaminopimeloyl-D-alanyl-D-alanine + UDP + H(+). Its pathway is cell wall biogenesis; peptidoglycan biosynthesis. Its function is as follows. Cell wall formation. Catalyzes the transfer of a GlcNAc subunit on undecaprenyl-pyrophosphoryl-MurNAc-pentapeptide (lipid intermediate I) to form undecaprenyl-pyrophosphoryl-MurNAc-(pentapeptide)GlcNAc (lipid intermediate II). This is UDP-N-acetylglucosamine--N-acetylmuramyl-(pentapeptide) pyrophosphoryl-undecaprenol N-acetylglucosamine transferase from Frankia casuarinae (strain DSM 45818 / CECT 9043 / HFP020203 / CcI3).